The chain runs to 435 residues: 5-methylthioadenosine/S-adenosylhomocysteine deaminase (435 aa).

Residues His65 and His67 each contribute to the Zn(2+) site. Substrate contacts are provided by Glu94, Arg150, and His189. His216 contributes to the Zn(2+) binding site. Substrate is bound by residues Glu219 and Asp304. A Zn(2+)-binding site is contributed by Asp304.

It belongs to the metallo-dependent hydrolases superfamily. MTA/SAH deaminase family. It depends on Zn(2+) as a cofactor.

It catalyses the reaction S-adenosyl-L-homocysteine + H2O + H(+) = S-inosyl-L-homocysteine + NH4(+). The catalysed reaction is S-methyl-5'-thioadenosine + H2O + H(+) = S-methyl-5'-thioinosine + NH4(+). In terms of biological role, catalyzes the deamination of 5-methylthioadenosine and S-adenosyl-L-homocysteine into 5-methylthioinosine and S-inosyl-L-homocysteine, respectively. Is also able to deaminate adenosine. This is 5-methylthioadenosine/S-adenosylhomocysteine deaminase from Bacillus cereus (strain B4264).